The primary structure comprises 129 residues: Protein yippee-like At5g53940 (129 aa).

The 98-residue stretch at 12–109 (RSYRCRFCRT…LERGRIVDEI (98 aa)) folds into the Yippee domain. 4 residues coordinate Zn(2+): C16, C19, C72, and C75.

The protein belongs to the yippee family.

The chain is Protein yippee-like At5g53940 from Arabidopsis thaliana (Mouse-ear cress).